We begin with the raw amino-acid sequence, 334 residues long: N-acetyl-gamma-glutamyl-phosphate reductase (334 aa).

Cysteine 154 is an active-site residue.

It belongs to the NAGSA dehydrogenase family. Type 1 subfamily.

The protein localises to the cytoplasm. The catalysed reaction is N-acetyl-L-glutamate 5-semialdehyde + phosphate + NADP(+) = N-acetyl-L-glutamyl 5-phosphate + NADPH + H(+). Its pathway is amino-acid biosynthesis; L-arginine biosynthesis; N(2)-acetyl-L-ornithine from L-glutamate: step 3/4. Its function is as follows. Catalyzes the NADPH-dependent reduction of N-acetyl-5-glutamyl phosphate to yield N-acetyl-L-glutamate 5-semialdehyde. This chain is N-acetyl-gamma-glutamyl-phosphate reductase, found in Vibrio vulnificus (strain YJ016).